Reading from the N-terminus, the 475-residue chain is Na(+)/H(+) antiporter NhaA 2 (475 aa).

12 helical membrane passes run 44–64, 92–112, 130–150, 156–176, 186–206, 211–231, 232–252, 255–275, 331–351, 368–388, 406–426, and 442–462; these read AQAT…WWAN, LKHI…GLEI, LILC…LFNW, IGWG…LTLV, AFLV…IALF, ISVI…IANY, AGVL…WTML, GVHP…RPML, ALDL…NAGV, LGIV…ACWL, VIGM…IATL, and ILFA…IIAA.

The protein belongs to the NhaA Na(+)/H(+) (TC 2.A.33) antiporter family.

The protein resides in the cell inner membrane. The enzyme catalyses Na(+)(in) + 2 H(+)(out) = Na(+)(out) + 2 H(+)(in). Its function is as follows. Na(+)/H(+) antiporter that extrudes sodium in exchange for external protons. This Psychromonas ingrahamii (strain DSM 17664 / CCUG 51855 / 37) protein is Na(+)/H(+) antiporter NhaA 2.